An 86-amino-acid chain; its full sequence is Cytochrome c6 (86 aa).

Residues Cys14, Cys17, His18, and Met58 each coordinate heme c.

The protein belongs to the cytochrome c family. PetJ subfamily. Monomer. In terms of processing, binds 1 heme c group covalently per subunit.

The protein resides in the plastid. Its subcellular location is the chloroplast thylakoid lumen. Functions as an electron carrier between membrane-bound cytochrome b6-f and photosystem I in oxygenic photosynthesis. The polypeptide is Cytochrome c6 (petJ) (Bumilleriopsis filiformis (Yellow-green alga)).